Reading from the N-terminus, the 616-residue chain is Chaperone protein HscA (616 aa).

It belongs to the heat shock protein 70 family.

Its function is as follows. Chaperone involved in the maturation of iron-sulfur cluster-containing proteins. Has a low intrinsic ATPase activity which is markedly stimulated by HscB. Involved in the maturation of IscU. The protein is Chaperone protein HscA of Klebsiella pneumoniae subsp. pneumoniae (strain ATCC 700721 / MGH 78578).